The chain runs to 315 residues: Olfactory receptor 2T5 (315 aa).

Topologically, residues 1 to 29 are extracellular; it reads MANITRMANHTGKLDFILMGLFRRSKHPA. 2 N-linked (GlcNAc...) asparagine glycosylation sites follow: N3 and N9. A helical transmembrane segment spans residues 30-53; it reads LLSVVIFVVFLKALSGNAVLILLI. Residues 54 to 61 are Cytoplasmic-facing; it reads HCDAHLHS. The helical transmembrane segment at 62-83 threads the bilayer; the sequence is PMYFFISQLSLMDMAYISVTVP. At 84-104 the chain is on the extracellular side; the sequence is KMLLDQVMGVNKVSAPECGMQ. A disulfide bridge connects residues C101 and C193. The chain crosses the membrane as a helical span at residues 105–124; sequence MFLYLTLAGSEFFLLATMAY. The Cytoplasmic segment spans residues 125-143; that stretch reads DRYVAICHPLRYPVLMNHR. The helical transmembrane segment at 144 to 162 threads the bilayer; the sequence is VCLFLASGCWFLGSVDGFM. Over 163 to 199 the chain is Extracellular; it reads LTPITMSFPFCRSWEIHHFFCEVPAVTILSCSDTSLY. A helical transmembrane segment spans residues 200–223; the sequence is ETLMYLCCVLMLLIPVTIISSSYL. Residues 224-240 are Cytoplasmic-facing; sequence LILLTVHRMNSAEGRKK. A helical membrane pass occupies residues 241-263; the sequence is AFATCSSHLTVVILFYGAAVYTY. Over 264–276 the chain is Extracellular; that stretch reads MLPSSYHTPEKDM. A helical membrane pass occupies residues 277-296; the sequence is MVSVFYTILTPVLNPLIYSL. Topologically, residues 297–315 are cytoplasmic; that stretch reads RNKDVMGALKKMLTVRFVL.

The protein belongs to the G-protein coupled receptor 1 family.

The protein resides in the cell membrane. In terms of biological role, odorant receptor. This Homo sapiens (Human) protein is Olfactory receptor 2T5 (OR2T5).